Consider the following 107-residue polypeptide: Large ribosomal subunit protein uL24 (107 aa).

The protein belongs to the universal ribosomal protein uL24 family. In terms of assembly, part of the 50S ribosomal subunit.

One of two assembly initiator proteins, it binds directly to the 5'-end of the 23S rRNA, where it nucleates assembly of the 50S subunit. In terms of biological role, one of the proteins that surrounds the polypeptide exit tunnel on the outside of the subunit. The protein is Large ribosomal subunit protein uL24 of Mesomycoplasma hyopneumoniae (strain J / ATCC 25934 / NCTC 10110) (Mycoplasma hyopneumoniae).